Reading from the N-terminus, the 609-residue chain is MSALTKIREGLAREDNTHVAGTLAPHEKEIHETPEVVSEVGPDHDKEATAGAINPDDKGNDSDVPSEDVQNGVKEIQAITLTWGKGSLAALLCLIWTLFLISGFRGSFYLVLVPYVTSEWSAHSLMTTIPIVSDAMTAACYIPMAKALDVWGRAEGFLLMSGFATLGLILMAVSQNLATFCAAQVFYSVGWGGMIYAVGVLAADASNLRNRGLAFAFTSSPYMITAFAGSKAAAAFVIDVKNWRWGFGWIALVLPCVTIPLFLVLKVNLRKAFKNGTVTKTTRNRGFFGSIWWAFNEFDVIGIFLFGGGLVVFLLPFNLAGHAPNGWSTGYIIAMIIVGFCTLIFFGVWEYWLAPVPFLQGRFLLDRSVVAACMIDLTYQVSYYTWNYFFTSFLQVVVNLGPAEAGYVNSTFQVVSGVLLFIVGFLIRKTGFYKWTFYFAVPIYIFALGLMIHFRAPNQYVGYIIMCEIFISIGGAVFILVMQLAVLAAVAHQYVAAALATLYVAGGVGGAVGGAISGAIWTNSFIPQLIKRLPESEVANATLIAGSIVNQLAYPVDSPARLAIQESYGFAQIRMLAAGVGIASLFFIWVPMLRNIDVKKLKQTKGLVL.

2 stretches are compositionally biased toward basic and acidic residues: residues 1 to 17 (MSALTKIREGLAREDNT) and 25 to 34 (PHEKEIHETP). The interval 1 to 69 (MSALTKIREG…NDSDVPSEDV (69 aa)) is disordered. 14 helical membrane-spanning segments follow: residues 81-101 (LTWGKGSLAALLCLIWTLFLI), 125-145 (LMTTIPIVSDAMTAACYIPMA), 154-174 (AEGFLLMSGFATLGLILMAVS), 182-202 (AAQVFYSVGWGGMIYAVGVLA), 220-240 (SPYMITAFAGSKAAAAFVIDV), 245-265 (WGFGWIALVLPCVTIPLFLVL), 300-320 (VIGIFLFGGGLVVFLLPFNLA), 329-349 (TGYIIAMIIVGFCTLIFFGVW), 368-390 (SVVAACMIDLTYQVSYYTWNYFF), 407-427 (YVNSTFQVVSGVLLFIVGFLI), 432-452 (FYKWTFYFAVPIYIFALGLMI), 469-489 (IFISIGGAVFILVMQLAVLAA), 496-516 (AAALATLYVAGGVGGAVGGAI), and 573-593 (IRMLAAGVGIASLFFIWVPML).

This sequence belongs to the major facilitator superfamily.

The protein resides in the cell membrane. In terms of biological role, major facilitator transporter involved in extracellular siderophore uptake. Gibberella zeae produces extracellular coprogen-type siderophores as well as the intracellular siderophore ferricrocin. The role of extracellular siderophores is to supply iron to the fungus during plant infection, and the intracellular ferricrocin is required for intracellular iron distribution and storage with a crucial role in ascus and ascospore development. The polypeptide is MFS siderochrome iron transporter 1 (Gibberella zeae (strain ATCC MYA-4620 / CBS 123657 / FGSC 9075 / NRRL 31084 / PH-1) (Wheat head blight fungus)).